A 119-amino-acid polypeptide reads, in one-letter code: Large ribosomal subunit protein bL12 (119 aa).

The protein belongs to the bacterial ribosomal protein bL12 family. Homodimer. Part of the ribosomal stalk of the 50S ribosomal subunit. Forms a multimeric L10(L12)X complex, where L10 forms an elongated spine to which 2 to 4 L12 dimers bind in a sequential fashion. Binds GTP-bound translation factors.

In terms of biological role, forms part of the ribosomal stalk which helps the ribosome interact with GTP-bound translation factors. Is thus essential for accurate translation. The sequence is that of Large ribosomal subunit protein bL12 from Lysinibacillus sphaericus (strain C3-41).